A 116-amino-acid polypeptide reads, in one-letter code: Putative iron-sulfur cluster insertion protein ErpA (116 aa).

Iron-sulfur cluster-binding residues include C44, C108, and C110.

It belongs to the HesB/IscA family. In terms of assembly, homodimer. The cofactor is iron-sulfur cluster.

Its function is as follows. Required for insertion of 4Fe-4S clusters. The chain is Putative iron-sulfur cluster insertion protein ErpA from Dechloromonas aromatica (strain RCB).